The following is an 841-amino-acid chain: Toll-like receptor 4 (841 aa).

A signal peptide spans 1–23; it reads MIPRIRLAVATIPAMAFLSCLRS. At 24–632 the chain is on the extracellular side; it reads ESWDPCVQVV…FRNATCQISE (609 aa). Cys29 and Cys40 are oxidised to a cystine. Asn35 carries N-linked (GlcNAc...) asparagine glycosylation. LRR repeat units follow at residues 55-76, 79-100, 103-124, 127-148, 151-172, 176-197, and 205-225; these read SVKI…SFSS, ELQV…AYQG, YLST…AFSG, SLQK…PIGH, TLNE…EYFS, NLEH…HLQV, and NLSL…AFNK. N-linked (GlcNAc...) asparagine glycosylation is found at Asn205, Asn238, Asn282, and Asn309. Cys281 and Cys306 are oxidised to a cystine. LRR repeat units follow at residues 374 to 395, 400 to 422, 423 to 444, 448 to 469, 472 to 495, 497 to 518, 521 to 542, and 545 to 568; these read NLQF…SHNE, KLKH…MGLE, QLEY…SIFL, NLHY…IFAG, SLQT…FTDL, NLIL…AFHS, RLQV…PYKP, and SLRI…QHLP. A disulfide bridge connects residues Cys390 and Cys391. N-linked (GlcNAc...) asparagine glycosylation is present at Asn526. Asn575 is a glycosylation site (N-linked (GlcNAc...) asparagine). In terms of domain architecture, LRRCT spans 579–630; that stretch reads NDFSCACEHQTFLQWVKDQKQLLVGAEQMVCTQPLEMQDLPVLSFRNATCQI. Intrachain disulfides connect Cys583-Cys609 and Cys585-Cys628. An N-linked (GlcNAc...) asparagine glycan is attached at Asn625. The helical transmembrane segment at 633 to 653 threads the bilayer; it reads AVISASVLTFLLVSVAGILVY. At 654-841 the chain is on the cytoplasmic side; the sequence is KFYFHLLLFV…SNQHDTTAFT (188 aa). Residues 673-816 enclose the TIR domain; the sequence is STYDAFVIYS…IFWRRLKKAL (144 aa).

It belongs to the Toll-like receptor family. As to quaternary structure, belongs to the lipopolysaccharide (LPS) receptor, a multi-protein complex containing at least CD14, LY96 and TLR4. Binding to bacterial LPS leads to homodimerization. Interacts with LY96 via the extracellular domain. Interacts with MYD88 and TIRAP via their respective TIR domains. Interacts with NOX4. Interacts with CNPY3 and HSP90B1; this interaction is required for proper folding in the endoplasmic reticulum. Interacts with MAP3K21; this interaction leads to negative regulation of TLR4 signaling. Interacts with CD36, following CD36 stimulation by oxLDL or amyloid-beta 42, and forms a heterodimer with TLR6. The trimeric complex is internalized and triggers inflammatory response. LYN kinase activity facilitates TLR4-TLR6 heterodimerization and signal initiation. Interacts with TICAM1 in response to LPS in a WDFY1-dependent manner. Interacts with WDFY1 in response to LPS. Interacts with SMPDL3B. Interacts with CEACAM1; upon lipopolysaccharide stimulation, forms a complex including TLR4 and the phosphorylated form of SYK and CEACAM1, which in turn, recruits PTPN6 that dephosphorylates SYK, reducing the production of reactive oxygen species (ROS) and lysosome disruption, which in turn, reduces the activity of the inflammasome. Interacts with RFTN1; the interaction occurs in response to lipopolysaccharide stimulation. Interacts with SCIMP; the interaction occurs in response to lipopolysaccharide stimulation and is enhanced by phosphorylation of SCIMP by LYN. This interaction facilitates the phosphorylation of TLR4 by LYN which elicits a selective cytokine response in macrophages. Interacts with TRAF3IP3. Interacts with TREM1; this interaction enhances TLR4-mediated inflammatory response. Interacts with ZG16B/PAUF. Interacts with CD82; this interaction inhibits TLR4-mediated signaling pathway. Phosphorylated on tyrosine residues by LYN after binding lipopolysaccharide. Post-translationally, ubiquitinated by RNF128 via 'Lys-28'-linked polyubiquitin chains, leading to proteasomal degradation.

The protein resides in the cell membrane. The protein localises to the early endosome. It is found in the cell projection. Its subcellular location is the ruffle. Its function is as follows. Transmembrane receptor that functions as a pattern recognition receptor recognizing pathogen- and damage-associated molecular patterns (PAMPs and DAMPs) to induce innate immune responses via downstream signaling pathways. At the plasma membrane, cooperates with LY96 to mediate the innate immune response to bacterial lipopolysaccharide (LPS). Also involved in LPS-independent inflammatory responses triggered by free fatty acids, such as palmitate, and Ni(2+). Mechanistically, acts via MYD88, TIRAP and TRAF6, leading to NF-kappa-B activation, cytokine secretion and the inflammatory response. Alternatively, CD14-mediated TLR4 internalization via endocytosis is associated with the initiation of a MYD88-independent signaling via the TICAM1-TBK1-IRF3 axis leading to type I interferon production. In addition to the secretion of proinflammatory cytokines, initiates the activation of NLRP3 inflammasome and formation of a positive feedback loop between autophagy and NF-kappa-B signaling cascade. In complex with TLR6, promotes inflammation in monocytes/macrophages by associating with TLR6 and the receptor CD86. Upon ligand binding, such as oxLDL or amyloid-beta 42, the TLR4:TLR6 complex is internalized and triggers inflammatory response, leading to NF-kappa-B-dependent production of CXCL1, CXCL2 and CCL9 cytokines, via MYD88 signaling pathway, and CCL5 cytokine, via TICAM1 signaling pathway. In myeloid dendritic cells, vesicular stomatitis virus glycoprotein G but not LPS promotes the activation of IRF7, leading to type I IFN production in a CD14-dependent manner. The polypeptide is Toll-like receptor 4 (TLR4) (Sus scrofa (Pig)).